We begin with the raw amino-acid sequence, 337 residues long: Anthranilate phosphoribosyltransferase (337 aa).

5-phospho-alpha-D-ribose 1-diphosphate is bound by residues Gly-82, 85-86 (GD), Thr-90, 92-95 (NIST), 110-118 (KHGGRSVSS), and Ser-122. Gly-82 contacts anthranilate. Ser-94 provides a ligand contact to Mg(2+). Arg-168 provides a ligand contact to anthranilate. Mg(2+)-binding residues include Asp-226 and Glu-227.

The protein belongs to the anthranilate phosphoribosyltransferase family. Homodimer. It depends on Mg(2+) as a cofactor.

The enzyme catalyses N-(5-phospho-beta-D-ribosyl)anthranilate + diphosphate = 5-phospho-alpha-D-ribose 1-diphosphate + anthranilate. The protein operates within amino-acid biosynthesis; L-tryptophan biosynthesis; L-tryptophan from chorismate: step 2/5. Functionally, catalyzes the transfer of the phosphoribosyl group of 5-phosphorylribose-1-pyrophosphate (PRPP) to anthranilate to yield N-(5'-phosphoribosyl)-anthranilate (PRA). The polypeptide is Anthranilate phosphoribosyltransferase (Francisella tularensis subsp. novicida (strain U112)).